The following is a 415-amino-acid chain: ORC1-type DNA replication protein 2 (415 aa).

Residues 69-73, Tyr-215, and Arg-227 contribute to the ATP site; that span reads TGKSV.

It belongs to the CDC6/cdc18 family.

Functionally, involved in regulation of DNA replication. The sequence is that of ORC1-type DNA replication protein 2 (cdc6-2) from Sulfolobus acidocaldarius (strain ATCC 33909 / DSM 639 / JCM 8929 / NBRC 15157 / NCIMB 11770).